Reading from the N-terminus, the 340-residue chain is Phospho-N-acetylmuramoyl-pentapeptide-transferase (340 aa).

Transmembrane regions (helical) follow at residues 3–23, 53–73, 79–99, 119–139, 144–164, 176–196, 200–220, 227–247, 250–270, and 315–335; these read MSLIAGVAAFVLTVLAMPHFI, GGTVFLVVAILISLIFNFHVF, AYGATAGILFVILIYGIIGFL, MALQIVAGLLFYFIHVLPSGT, IGGLTIQLGVFYVLFVLFWIV, IDGLASVSVVISLIAYGIIAF, ELAILTIIITMIGALLGFFVF, VFMGDVGSLSLGAMLAVISIA, VEWTLLLIGVVYVLETASVML, and VDAFLWTIGALASSITLWMVL.

The protein belongs to the glycosyltransferase 4 family. MraY subfamily. Mg(2+) is required as a cofactor.

It is found in the cell membrane. The catalysed reaction is UDP-N-acetyl-alpha-D-muramoyl-L-alanyl-gamma-D-glutamyl-L-lysyl-D-alanyl-D-alanine + di-trans,octa-cis-undecaprenyl phosphate = Mur2Ac(oyl-L-Ala-gamma-D-Glu-L-Lys-D-Ala-D-Ala)-di-trans,octa-cis-undecaprenyl diphosphate + UMP. It functions in the pathway cell wall biogenesis; peptidoglycan biosynthesis. Its function is as follows. Catalyzes the initial step of the lipid cycle reactions in the biosynthesis of the cell wall peptidoglycan: transfers peptidoglycan precursor phospho-MurNAc-pentapeptide from UDP-MurNAc-pentapeptide onto the lipid carrier undecaprenyl phosphate, yielding undecaprenyl-pyrophosphoryl-MurNAc-pentapeptide, known as lipid I. This chain is Phospho-N-acetylmuramoyl-pentapeptide-transferase, found in Streptococcus thermophilus (strain CNRZ 1066).